The primary structure comprises 360 residues: 3-isopropylmalate dehydrogenase (360 aa).

76 to 89 serves as a coordination point for NAD(+); the sequence is GPKWDTIERDIRPE. Positions 96, 106, 134, and 224 each coordinate substrate. Mg(2+) contacts are provided by Asp-224, Asp-248, and Asp-252. An NAD(+)-binding site is contributed by 282-294; it reads GSAPDIAGQGIAN.

It belongs to the isocitrate and isopropylmalate dehydrogenases family. LeuB type 1 subfamily. Homodimer. Requires Mg(2+) as cofactor. It depends on Mn(2+) as a cofactor.

It is found in the cytoplasm. The catalysed reaction is (2R,3S)-3-isopropylmalate + NAD(+) = 4-methyl-2-oxopentanoate + CO2 + NADH. Its pathway is amino-acid biosynthesis; L-leucine biosynthesis; L-leucine from 3-methyl-2-oxobutanoate: step 3/4. Catalyzes the oxidation of 3-carboxy-2-hydroxy-4-methylpentanoate (3-isopropylmalate) to 3-carboxy-4-methyl-2-oxopentanoate. The product decarboxylates to 4-methyl-2 oxopentanoate. This Pseudomonas syringae pv. tomato (strain ATCC BAA-871 / DC3000) protein is 3-isopropylmalate dehydrogenase.